The chain runs to 3739 residues: Cardiomyopathy-associated protein 5 (3739 aa).

Disordered regions lie at residues 1–205 (MESG…PPIT), 268–814 (SLEP…SAFV), 835–884 (VSVS…AIQS), 967–1270 (LSED…SDVP), 1288–1313 (TQASLEPEAEDLVPPPTSGWEKRDAK), 1325–1637 (SSAL…NLVS), 1650–1969 (EMNR…EKGK), 1986–2016 (SSIPDSKVSDNEDLETRPGPSVEKAVPAIEP), 2065–2246 (FLSN…WETR), 2273–2318 (AVGE…LALD), 2377–2498 (VYPE…SAVE), 2513–2532 (KKQETWSDRPTVHTFQTSKD), and 2579–2616 (SADGVPPMGGTAQEPEGTSVKDEEFSVTSKPAGLSEDQ). The span at 18–47 (ADEEVAQELETEEESEGEGEETAAESEEEP) shows a compositional bias: acidic residues. The span at 48–62 (DARLSDEDEEGKTKQ) shows a compositional bias: basic and acidic residues. Positions 84-106 (TWETNSSRSSTPWASGESQTSGI) are enriched in polar residues. Residues 130 to 153 (RTRKRTQKSKRGSPSLRRKGSKKR) are compositionally biased toward basic residues. S155 is modified (phosphoserine). Composition is skewed to polar residues over residues 156 to 175 (LESQDVLTNQEDGPSISESP) and 325 to 336 (ADSNLNVPSSTE). The stretch at 380–406 (ATMVLERAKEELEQNAQGKESSEDDAS) forms a coiled coil. Basic and acidic residues-rich tracts occupy residues 479–637 (IVHR…REEE), 644–663 (SIVHREEEHAPEPIVHREEE), and 670–730 (SIVH…ERGV). Repeat copies occupy residues 482–493 (REEEHAPEPIVH) and 494–505 (REEEHAPEPIVH). The interval 482–720 (REEEHAPEPI…EEHAPEPMVH (239 aa)) is 20 X 12 AA approximate tandem repeats of R-[DE]-[EK]-[EG]-H-[AV]-P-E-[PS]-[IM]-V-[HLR]. Residues 506-519 (REEEHAPEPESIVH) form a 3; approximate repeat. The stretch at 520-531 (REEEHAPESIVH) is repeat 4. Residues 532-545 (REEEHAPEPVPIVH) form a 5; approximate repeat. A 6; approximate repeat occupies 546 to 559 (REEEHAPEPESIVH). 4 tandem repeats follow at residues 560 to 571 (REEEHAPEPIVH), 572 to 583 (RDKGHALEPIVH), 584 to 595 (REEEHAPEPIVH), and 596 to 607 (RDEGHAPEPIVH). An 11; approximate repeat occupies 608 to 621 (REEEHVPEPESIVR). The stretch at 622-633 (KGEEHAPEPIVH) is one 12; approximate repeat. One copy of the 14; approximate repeat lies at 634-647 (REEEQVPEPESIVH). Residues 648–659 (REEEHAPEPIVH) form repeat 15. The 16; approximate repeat unit spans residues 660–673 (REEEQVPEPESIVH). 4 tandem repeats follow at residues 674–685 (REEEHAPEPMVL), 686–696 (REEHAPEPIVR), 697–708 (REEEHAPEPIVH), and 709–720 (REEEHAPEPMVH). Over residues 740–756 (TEPEDSSLEEEIIELDY) the composition is skewed to acidic residues. Residue S850 is modified to Phosphoserine. Polar residues-rich tracts occupy residues 861–884 (PAMTSVSEQSLSPSTTEKTSAIQS) and 1151–1161 (CLTSPSEQTVL). Composition is skewed to basic and acidic residues over residues 1188–1197 (AETEQNKVEP) and 1230–1242 (EHSEPSQEREESS). Residues 1337 to 1351 (TSVLPTSQPSVSPES) show a composition bias toward polar residues. Basic and acidic residues-rich tracts occupy residues 1441-1460 (LEQRMLSKNEPEVAKPHSPP) and 1476-1486 (TEVKQESKITR). A compositionally biased stretch (polar residues) spans 1522–1540 (ASSSATTVPVTKLDSNSTK). Basic and acidic residues-rich tracts occupy residues 1620-1631 (NDKHEEITRSPD), 1697-1706 (IDSRDRDRSL), 1726-1742 (GPAELQRRGKEQEENRK), 1760-1770 (IEQKEPKRTLH), 1786-1803 (DKPELGVKQLAEKKENLE), and 1836-1850 (EKPDGLVNQHEDRKP). Residues 1854–1863 (QLESSESTDL) are compositionally biased toward polar residues. Composition is skewed to basic and acidic residues over residues 1874 to 1885 (DTDHTSETRNQE), 1896 to 1916 (LSQEPRRVQSKAVDDSEEGRK), 1992 to 2001 (KVSDNEDLET), and 2153 to 2165 (ARKEEPSSDHKET). A compositionally biased stretch (polar residues) spans 2181-2190 (KSAQSAFTRM). Residue S2192 is modified to Phosphoserine. 5 stretches are compositionally biased toward basic and acidic residues: residues 2212-2244 (GEDRLRQEMPKPTSLEHCEEEVERPTEEKDGWE), 2279-2299 (RMPESRPFKLEESKAAERLEQ), 2306-2318 (KLMEKPSKTLALD), 2377-2419 (VYPE…ETDG), and 2429-2448 (ELEKSGESRVDLKEERRRFV). At S2411 the chain carries Phosphoserine. The residue at position 2495 (S2495) is a Phosphoserine. Residues 2513–2523 (KKQETWSDRPT) show a composition bias toward basic and acidic residues. Residues 2640-2664 (SVDQEESEQMQDKLQYLEEKASFKS) adopt a coiled-coil conformation. Disordered stretches follow at residues 2667-2725 (VHDE…QPTV), 2742-2773 (LSPGSGKQKSTVEESSEEATKTLTSFPESSAE), 2791-2835 (GPEK…GMPL), 2881-2959 (EKNE…EREI), 3027-3047 (LESEPSSQGNEAGNASPDVNL), and 3111-3174 (PEEP…QKEP). The segment covering 2682–2709 (SKLEVPDRKITSLKENKTKETHKTKEEI) has biased composition (basic and acidic residues). A required for RYR2 clustering region spans residues 2731–3041 (YFEKYTLIDY…SSQGNEAGNA (311 aa)). The span at 2762 to 2773 (KTLTSFPESSAE) shows a compositional bias: polar residues. Basic and acidic residues-rich tracts occupy residues 2791-2804 (GPEKDDSKLSHAEM) and 2812-2828 (KPDDRNAPKGISRDVDS). Phosphoserine is present on S2905. Residues 2918-2929 (YILKDDILHDES) show a composition bias toward basic and acidic residues. Residues 3030–3047 (EPSSQGNEAGNASPDVNL) are compositionally biased toward polar residues. The segment covering 3153-3162 (VWDRTEDQSA) has biased composition (basic and acidic residues). Residues 3187–3214 (KSLVSEMDKALDIHKDHEVSALDTAISA) form an amphipathic helix H1 region. Positions 3215–3342 (VKVQLGEFLE…ERLLSAMEST (128 aa)) are B-box coiled-coil; BBC. Positions 3244-3323 (FNTIEEKCSK…REAEELDETV (80 aa)) form a coiled coil. The segment at 3301 to 3318 (SMDTAKDTLETIVREAEE) is amphipathic helix H2. 2 consecutive Fibronectin type-III domains span residues 3374–3475 (VPQP…TAPS) and 3476–3568 (TPVI…TRGT). An amphipathic helix H3 region spans residues 3421 to 3437 (EINELVEEYRLTVKESC). The B30.2/SPRY domain maps to 3550–3735 (NASGTSEQSE…LHLGLEPPDS (186 aa)).

In terms of assembly, interacts with PRKAR2A. Interacts with ACTN2, DES and DTNBP1/dysbindin. Interacts with DMD/dystrophin. Interacts with the calcineurin catalytic subunit PPP3CA. Interacts with TTN. Interacts with CAPN3; this interaction, which results in CMYA5 proteolysis, may protect CAPN3 from autolysis. Interacts with FSD2. In cardiac muscles, identified in a complex composed of FSD2, CMYA5 and RYR2. Post-translationally, phosphorylated by PKA. In terms of tissue distribution, expressed in skin as well as in cardiac muscle. Expressed in skeletal muscle (at protein level).

Its subcellular location is the nucleus. It is found in the cytoplasm. It localises to the perinuclear region. The protein localises to the myofibril. The protein resides in the sarcomere. Its subcellular location is the m line. It is found in the sarcoplasmic reticulum. In terms of biological role, may serve as an anchoring protein that mediates the subcellular compartmentation of protein kinase A (PKA) via binding to PRKAR2A. May attenuate calcineurin ability to induce slow-fiber gene program in muscle and may negatively modulate skeletal muscle regeneration. Plays a role in the assembly of ryanodine receptor (RYR2) clusters in striated muscle. The sequence is that of Cardiomyopathy-associated protein 5 (Cmya5) from Mus musculus (Mouse).